Here is a 260-residue protein sequence, read N- to C-terminus: MATISSILPCHGLLQHCSSSSSSSKPKFSSQNLVQLQSFSNGFGLKLKTRVSTNPPLLKVRAVVTEETSSSSTASSSSDGEGARRLYVGNIPRNLNNDELRTIVEEHGAIEIAEVMYDKYSGRSRRFGFVTMKTVEDANAVIEKLNDTEIGGRKIKVNITEKPLEGMDIATTQAEDSQFVESPYKVYIGNLAKTVTNELLKDFFSEKGKVLGAKVQRTPGTSKSNGFGFVSFSSEEEVEAAIQALNNSVLEGQKIRVNKA.

The transit peptide at 1-62 (MATISSILPC…TNPPLLKVRA (62 aa)) directs the protein to the chloroplast. Residues 63–78 (VVTEETSSSSTASSSS) show a composition bias toward low complexity. The interval 63-83 (VVTEETSSSSTASSSSDGEGA) is disordered. 2 consecutive RRM domains span residues 84-162 (RRLY…ITEK) and 184-260 (YKVY…VNKA).

In terms of assembly, component of the chloroplast small ribosomal subunit (SSU). Mature 70S chloroplast ribosomes of higher plants consist of a small (30S) and a large (50S) subunit. The 30S small subunit contains 1 molecule of ribosomal RNA (16S rRNA) and 24 different proteins. The 50S large subunit contains 3 rRNA molecules (23S, 5S and 4.5S rRNA) and 33 different proteins.

The protein resides in the plastid. It localises to the chloroplast. Component of the chloroplast ribosome (chloro-ribosome), a dedicated translation machinery responsible for the synthesis of chloroplast genome-encoded proteins, including proteins of the transcription and translation machinery and components of the photosynthetic apparatus. cS22 may have a role in the recruitment of stored chloroplast mRNAs for active protein synthesis. The polypeptide is Small ribosomal subunit protein cS22 (PSRP2) (Spinacia oleracea (Spinach)).